The sequence spans 152 residues: Transcriptional repressor NrdR (152 aa).

The segment at 3–34 (CPFCHNEQSRVIDSRVIDSGTSIRRRRECAAC) is a zinc-finger region. The ATP-cone domain occupies 46–136 (LSVVKRNGLA…VYKSFESADD (91 aa)).

This sequence belongs to the NrdR family. The cofactor is Zn(2+).

In terms of biological role, negatively regulates transcription of bacterial ribonucleotide reductase nrd genes and operons by binding to NrdR-boxes. The chain is Transcriptional repressor NrdR from Corynebacterium aurimucosum (strain ATCC 700975 / DSM 44827 / CIP 107346 / CN-1) (Corynebacterium nigricans).